We begin with the raw amino-acid sequence, 275 residues long: Lacto-N-neotetraose biosynthesis glycosyltransferase LgtB (275 aa).

The protein belongs to the glycosyltransferase 25 family.

The protein operates within glycan metabolism; lacto-N-neotetraose biosynthesis. It functions in the pathway bacterial outer membrane biogenesis; lipooligosaccharide biosynthesis. Adds the second galactose to the lacto-N-tetraose chain in lipooligosaccharide (LOS). This Neisseria meningitidis serogroup B (strain ATCC BAA-335 / MC58) protein is Lacto-N-neotetraose biosynthesis glycosyltransferase LgtB (lgtB).